We begin with the raw amino-acid sequence, 209 residues long: Octanoyltransferase (209 aa).

A BPL/LPL catalytic domain is found at 30-209 (VNEPEIVYLV…IQTEFNKIFT (180 aa)). Residues 69 to 76 (RGGKFTFH), 143 to 145 (AIG), and 156 to 158 (GVA) each bind substrate. Cys174 acts as the Acyl-thioester intermediate in catalysis.

The protein belongs to the LipB family.

The protein resides in the cytoplasm. The enzyme catalyses octanoyl-[ACP] + L-lysyl-[protein] = N(6)-octanoyl-L-lysyl-[protein] + holo-[ACP] + H(+). Its pathway is protein modification; protein lipoylation via endogenous pathway; protein N(6)-(lipoyl)lysine from octanoyl-[acyl-carrier-protein]: step 1/2. In terms of biological role, catalyzes the transfer of endogenously produced octanoic acid from octanoyl-acyl-carrier-protein onto the lipoyl domains of lipoate-dependent enzymes. Lipoyl-ACP can also act as a substrate although octanoyl-ACP is likely to be the physiological substrate. The polypeptide is Octanoyltransferase (Rickettsia canadensis (strain McKiel)).